The sequence spans 95 residues: Small ribosomal subunit protein bS21 (95 aa).

The segment at 55 to 95 (RKLARKKMQREGLLPMKPKPVFGAGPGAGRGGPGAGARPPR) is disordered. Gly residues predominate over residues 78–89 (AGPGAGRGGPGA).

This sequence belongs to the bacterial ribosomal protein bS21 family.

The polypeptide is Small ribosomal subunit protein bS21 (Nitrobacter hamburgensis (strain DSM 10229 / NCIMB 13809 / X14)).